A 474-amino-acid polypeptide reads, in one-letter code: tRNA-2-methylthio-N(6)-dimethylallyladenosine synthase (474 aa).

One can recognise an MTTase N-terminal domain in the interval 3–120; sequence QKLHIKTWGC…LPEMINQIRG (118 aa). Cys-12, Cys-49, Cys-83, Cys-157, Cys-161, and Cys-164 together coordinate [4Fe-4S] cluster. Residues 143–375 enclose the Radical SAM core domain; the sequence is RAEGPTAFVS…QERINQQAAQ (233 aa). A TRAM domain is found at 378–441; the sequence is RRMLGTEQRV…TNSLRGEVVR (64 aa).

This sequence belongs to the methylthiotransferase family. MiaB subfamily. Monomer. [4Fe-4S] cluster serves as cofactor.

It is found in the cytoplasm. It catalyses the reaction N(6)-dimethylallyladenosine(37) in tRNA + (sulfur carrier)-SH + AH2 + 2 S-adenosyl-L-methionine = 2-methylsulfanyl-N(6)-dimethylallyladenosine(37) in tRNA + (sulfur carrier)-H + 5'-deoxyadenosine + L-methionine + A + S-adenosyl-L-homocysteine + 2 H(+). In terms of biological role, catalyzes the methylthiolation of N6-(dimethylallyl)adenosine (i(6)A), leading to the formation of 2-methylthio-N6-(dimethylallyl)adenosine (ms(2)i(6)A) at position 37 in tRNAs that read codons beginning with uridine. In Haemophilus influenzae (strain PittGG), this protein is tRNA-2-methylthio-N(6)-dimethylallyladenosine synthase.